The following is a 146-amino-acid chain: Large ribosomal subunit protein uL15 (146 aa).

The segment at 1 to 65 is disordered; that stretch reads MSDIQLNSLK…GQMPLQRRLP (65 aa). Residues 24–34 show a composition bias toward gly residues; sequence RGIGSGLGKTA.

It belongs to the universal ribosomal protein uL15 family. In terms of assembly, part of the 50S ribosomal subunit.

Its function is as follows. Binds to the 23S rRNA. In Bordetella avium (strain 197N), this protein is Large ribosomal subunit protein uL15.